Consider the following 45-residue polypeptide: Large ribosomal subunit protein bL36 (45 aa).

It belongs to the bacterial ribosomal protein bL36 family.

This chain is Large ribosomal subunit protein bL36, found in Psychrobacter sp. (strain PRwf-1).